The chain runs to 132 residues: Small ribosomal subunit protein uS8 (132 aa).

Belongs to the universal ribosomal protein uS8 family. As to quaternary structure, part of the 30S ribosomal subunit. Contacts proteins S5 and S12.

Its function is as follows. One of the primary rRNA binding proteins, it binds directly to 16S rRNA central domain where it helps coordinate assembly of the platform of the 30S subunit. The chain is Small ribosomal subunit protein uS8 from Azorhizobium caulinodans (strain ATCC 43989 / DSM 5975 / JCM 20966 / LMG 6465 / NBRC 14845 / NCIMB 13405 / ORS 571).